A 218-amino-acid chain; its full sequence is Trichothecene biosynthesis transcription regulator TRI6 (218 aa).

The disordered stretch occupies residues Ser154–His181. Over residues Asp162–Arg176 the composition is skewed to basic and acidic residues. A C2H2-type zinc finger spans residues Ile185–His215.

It localises to the nucleus. In terms of biological role, transcriptional activator of part of the trichothecene biosynthesis cluster that mediates the production of the antimicrobial trichothecene harzianum A (HA) that plays a role in Botrytis cinerea antagonistic activity and plant defense priming. Regulates expression of both trichothecene and mevalonate pathway genes. The protein is Trichothecene biosynthesis transcription regulator TRI6 of Trichoderma arundinaceum.